A 511-amino-acid polypeptide reads, in one-letter code: Lysine--tRNA ligase (511 aa).

The disordered stretch occupies residues 1-21 (MHTEKDPNKNTPEQQTPISLN). Residues 9–21 (KNTPEQQTPISLN) are compositionally biased toward polar residues. Glutamate 422 and glutamate 429 together coordinate Mg(2+).

This sequence belongs to the class-II aminoacyl-tRNA synthetase family. In terms of assembly, homodimer. Requires Mg(2+) as cofactor.

Its subcellular location is the cytoplasm. It carries out the reaction tRNA(Lys) + L-lysine + ATP = L-lysyl-tRNA(Lys) + AMP + diphosphate. The sequence is that of Lysine--tRNA ligase from Pelodictyon phaeoclathratiforme (strain DSM 5477 / BU-1).